The chain runs to 383 residues: Histidine decarboxylase (383 aa).

Position 120 (His120) interacts with substrate. Lys233 is modified (N6-(pyridoxal phosphate)lysine).

It belongs to the group II decarboxylase family. Homotetramer. Requires pyridoxal 5'-phosphate as cofactor.

The enzyme catalyses L-histidine + H(+) = histamine + CO2. This is Histidine decarboxylase from Acinetobacter baumannii (strain ATCC 17978 / DSM 105126 / CIP 53.77 / LMG 1025 / NCDC KC755 / 5377).